Consider the following 142-residue polypeptide: Lysozyme X (142 aa).

Residues 1 to 19 (MRALLGICVLALVTPAVLG) form the signal peptide. Residues 20–142 (RTMDRCSLAR…YLPPIDDCFV (123 aa)) enclose the C-type lysozyme domain. Intrachain disulfides connect Cys-25–Cys-140, Cys-46–Cys-130, Cys-81–Cys-97, and Cys-93–Cys-111. Catalysis depends on residues Glu-51 and Asp-69.

This sequence belongs to the glycosyl hydrolase 22 family. As to expression, found in the midgut.

It carries out the reaction Hydrolysis of (1-&gt;4)-beta-linkages between N-acetylmuramic acid and N-acetyl-D-glucosamine residues in a peptidoglycan and between N-acetyl-D-glucosamine residues in chitodextrins.. In terms of biological role, unlikely to play an active role in the humoral immune defense. May have a function in the digestion of bacteria in the food. May be involved in the clearance of bacteria from the larval gut before metamorphosis. The polypeptide is Lysozyme X (LysX) (Drosophila melanogaster (Fruit fly)).